The following is a 336-amino-acid chain: Casein kinase II subunit alpha (336 aa).

A Protein kinase domain is found at 37-322; the sequence is YQLVRKLGRG…AREAMAHPYF (286 aa). ATP is bound by residues 43-51 and Lys-66; that span reads LGRGKYSEV. The active-site Proton acceptor is Asp-154.

This sequence belongs to the protein kinase superfamily. Ser/Thr protein kinase family. CK2 subfamily. As to quaternary structure, tetramer of two alpha and two beta chains. Mg(2+) serves as cofactor.

The protein localises to the nucleus. It is found in the nucleolus. It carries out the reaction L-seryl-[protein] + ATP = O-phospho-L-seryl-[protein] + ADP + H(+). It catalyses the reaction L-threonyl-[protein] + ATP = O-phospho-L-threonyl-[protein] + ADP + H(+). Its function is as follows. Casein kinases are operationally defined by their preferential utilization of acidic proteins such as caseins as substrates. The alpha chain contains the catalytic site. May participate in Wnt signaling. In Drosophila melanogaster (Fruit fly), this protein is Casein kinase II subunit alpha (CkIIalpha).